The sequence spans 89 residues: Small ribosomal subunit protein uS15 (89 aa).

The protein belongs to the universal ribosomal protein uS15 family. Part of the 30S ribosomal subunit. Forms a bridge to the 50S subunit in the 70S ribosome, contacting the 23S rRNA.

Its function is as follows. One of the primary rRNA binding proteins, it binds directly to 16S rRNA where it helps nucleate assembly of the platform of the 30S subunit by binding and bridging several RNA helices of the 16S rRNA. In terms of biological role, forms an intersubunit bridge (bridge B4) with the 23S rRNA of the 50S subunit in the ribosome. This Saccharopolyspora erythraea (strain ATCC 11635 / DSM 40517 / JCM 4748 / NBRC 13426 / NCIMB 8594 / NRRL 2338) protein is Small ribosomal subunit protein uS15.